Reading from the N-terminus, the 272-residue chain is D-aminoacyl-tRNA deacylase (272 aa).

The protein belongs to the DtdA deacylase family. In terms of assembly, monomer. Requires Zn(2+) as cofactor.

The enzyme catalyses a D-aminoacyl-tRNA + H2O = a tRNA + a D-alpha-amino acid + H(+). It carries out the reaction glycyl-tRNA(Ala) + H2O = tRNA(Ala) + glycine + H(+). D-aminoacyl-tRNA deacylase with broad substrate specificity. By recycling D-aminoacyl-tRNA to D-amino acids and free tRNA molecules, this enzyme counteracts the toxicity associated with the formation of D-aminoacyl-tRNA entities in vivo. This is D-aminoacyl-tRNA deacylase from Hyperthermus butylicus (strain DSM 5456 / JCM 9403 / PLM1-5).